The chain runs to 276 residues: MKTSATSFIPGSLVLAFCLPVVATSPKTLAIPEKLQEAVGKVTVNATTCTVICGLGFKEETVCEVGPDGVRRKCKSQRLECLTNWLCGMLHFTLLIGKEFKLSCLSPDILEIGQGAFRFTWRLARGIISTDDEVFKPFRASSYFIKFQSIQEYDSGTYRCDVQLLKNLRLVKRLYFGLRVLPPNLVNLNFHQSLTEDQKLVDEGLEVNLDNYSRPQHPPWKKKVAIAVGIGVAGGVTGGVLVSIVLCGRLSVIHSSASLETLQALLPKGGMLRKPD.

An N-terminal signal peptide occupies residues 1 to 24 (MKTSATSFIPGSLVLAFCLPVVAT). The Extracellular segment spans residues 25–225 (SPKTLAIPEK…QHPPWKKKVA (201 aa)). N-linked (GlcNAc...) asparagine glycosylation occurs at N45. The region spanning 83–176 (TNWLCGMLHF…NLRLVKRLYF (94 aa)) is the Ig-like domain. C104 and C160 are disulfide-bonded. N-linked (GlcNAc...) asparagine glycosylation is present at N211. The chain crosses the membrane as a helical span at residues 226 to 246 (IAVGIGVAGGVTGGVLVSIVL). Topologically, residues 247–276 (CGRLSVIHSSASLETLQALLPKGGMLRKPD) are cytoplasmic.

Forms a complex with IZUMO1 and SPACA6 on spermatocyte cell membrane required for fertilization.

The protein localises to the cell membrane. Its function is as follows. Essential fertilization factor required for male fertility. Part of a conserved trimeric sperm complex with the essential fertilization factors IZUMO1 and SPACA6 which bridges sperm and oocyte membranes during fertilization by binding to IZUMO1R/JUNO on the oocyte. The sequence is that of Transmembrane protein 81 (TMEM81) from Bos taurus (Bovine).